A 402-amino-acid polypeptide reads, in one-letter code: Probable peptidoglycan glycosyltransferase FtsW (402 aa).

Residues 1–24 lie on the Cytoplasmic side of the membrane; the sequence is MLYRLKLLLSGQNTKKERVRAKLE. The helical transmembrane segment at 25 to 45 threads the bilayer; it reads IDISIVFVMLGLLIFGWVMVT. At 46–63 the chain is on the periplasmic side; that stretch reads SASMVVALDDYNNPYFYS. The helical transmembrane segment at 64 to 84 threads the bilayer; that stretch reads IRQGFFAVIAIFLFLLALLVP. Residues 85–91 lie on the Cytoplasmic side of the membrane; it reads TKNYEKN. A helical membrane pass occupies residues 92 to 112; it reads YNAFFFIMLIVLVAVLVPGVG. The Periplasmic segment spans residues 113 to 121; the sequence is KSVNGARRW. The chain crosses the membrane as a helical span at residues 122-142; that stretch reads IPLIIINIQVAELAKLLAIIF. The Cytoplasmic portion of the chain corresponds to 143–160; sequence FSGYIAENLPKMTNFKEG. 2 helical membrane passes run 161-181 and 182-202; these read ILTP…QPDF and GSTV…GNKV. Position 203 (Arg203) is a topological domain, cytoplasmic. Residues 204 to 224 form a helical membrane-spanning segment; it reads WYGLLIGAMLIMATMLVIISP. Residues 225–284 lie on the Periplasmic side of the membrane; that stretch reads YRMHRITGFLHPWENANGSGYQLVQALIGFGRGGWFGDGLGNGVQKQFFLPEAHTDFITS. Residues 285–305 form a helical membrane-spanning segment; that stretch reads VIAEEIGVIGLMILLMVYLFI. At 306 to 324 the chain is on the cytoplasmic side; sequence VFRAMNIAKMAFELKRYYQ. Residues 325 to 345 traverse the membrane as a helical segment; it reads AFLSYGISFWIGFQVFVNIGV. Residues 346–357 are Periplasmic-facing; it reads NTGLLPTKGLTL. Residues 358 to 378 form a helical membrane-spanning segment; it reads PLISYGGSSLLIMCFTLGILV. Over 379-402 the chain is Cytoplasmic; it reads RVDFENKLLADTINPKYIYKKVRK.

The protein belongs to the SEDS family. FtsW subfamily.

The protein resides in the cell inner membrane. It carries out the reaction [GlcNAc-(1-&gt;4)-Mur2Ac(oyl-L-Ala-gamma-D-Glu-L-Lys-D-Ala-D-Ala)](n)-di-trans,octa-cis-undecaprenyl diphosphate + beta-D-GlcNAc-(1-&gt;4)-Mur2Ac(oyl-L-Ala-gamma-D-Glu-L-Lys-D-Ala-D-Ala)-di-trans,octa-cis-undecaprenyl diphosphate = [GlcNAc-(1-&gt;4)-Mur2Ac(oyl-L-Ala-gamma-D-Glu-L-Lys-D-Ala-D-Ala)](n+1)-di-trans,octa-cis-undecaprenyl diphosphate + di-trans,octa-cis-undecaprenyl diphosphate + H(+). It functions in the pathway cell wall biogenesis; peptidoglycan biosynthesis. Peptidoglycan polymerase that is essential for cell division. This chain is Probable peptidoglycan glycosyltransferase FtsW, found in Francisella salina.